A 352-amino-acid polypeptide reads, in one-letter code: ATP synthase subunit a 2 (352 aa).

Positions 1–26 are cleaved as a signal peptide; that stretch reads MRKKAISRILALVVPVLLSLNSQAFA. The next 7 helical transmembrane spans lie at 112–132, 172–192, 195–215, 232–252, 264–284, 289–309, and 310–330; these read VVMI…AGAS, FLPY…LGLI, GATA…TFVI, HLTA…EILG, LFAN…ISFI, IVAV…ELFV, and AFLQ…LATA.

It belongs to the ATPase A chain family. In terms of assembly, F-type ATPases have 2 components, CF(1) - the catalytic core - and CF(0) - the membrane proton channel. CF(1) has five subunits: alpha(3), beta(3), gamma(1), delta(1), epsilon(1). CF(0) has four main subunits: a, b, b' and c.

The protein localises to the cell inner membrane. Its function is as follows. Key component of the proton channel; it plays a direct role in the translocation of protons across the membrane. The sequence is that of ATP synthase subunit a 2 from Chlorobaculum tepidum (strain ATCC 49652 / DSM 12025 / NBRC 103806 / TLS) (Chlorobium tepidum).